Here is a 634-residue protein sequence, read N- to C-terminus: uncharacterized protein (634 aa).

The signal sequence occupies residues 1-40; the sequence is MWLQQRLKGLPGLLSSSWARRLLCLLGLLVLLLWFAGSGA. Topologically, residues 41 to 589 are extracellular; the sequence is RRAAGGLQLL…DEHMAQQDPG (549 aa). Asn-363 is a glycosylation site (N-linked (GlcNAc...) asparagine). A helical transmembrane segment spans residues 590-610; that stretch reads LPFLFWFSVASLITLFHLFLF. Over 611–634 the chain is Cytoplasmic; that stretch reads KLIYNEYCGPGAKPFFRNKEDPSV.

It localises to the membrane. This is an uncharacterized protein from Bos taurus (Bovine).